Reading from the N-terminus, the 300-residue chain is 4-hydroxy-tetrahydrodipicolinate synthase (300 aa).

Residue T57 coordinates pyruvate. The Proton donor/acceptor role is filled by Y145. Residue K173 is the Schiff-base intermediate with substrate of the active site. I213 contributes to the pyruvate binding site.

The protein belongs to the DapA family. As to quaternary structure, homotetramer; dimer of dimers.

Its subcellular location is the cytoplasm. It carries out the reaction L-aspartate 4-semialdehyde + pyruvate = (2S,4S)-4-hydroxy-2,3,4,5-tetrahydrodipicolinate + H2O + H(+). Its pathway is amino-acid biosynthesis; L-lysine biosynthesis via DAP pathway; (S)-tetrahydrodipicolinate from L-aspartate: step 3/4. In terms of biological role, catalyzes the condensation of (S)-aspartate-beta-semialdehyde [(S)-ASA] and pyruvate to 4-hydroxy-tetrahydrodipicolinate (HTPA). The polypeptide is 4-hydroxy-tetrahydrodipicolinate synthase (Corynebacterium urealyticum (strain ATCC 43042 / DSM 7109)).